The primary structure comprises 362 residues: Chorismate synthase (362 aa).

Residues R48 and R54 each coordinate NADP(+). FMN contacts are provided by residues 131 to 133 (RSS), 243 to 244 (NA), G287, 302 to 306 (KPTSS), and R328.

Belongs to the chorismate synthase family. In terms of assembly, homotetramer. Requires FMNH2 as cofactor.

It carries out the reaction 5-O-(1-carboxyvinyl)-3-phosphoshikimate = chorismate + phosphate. It participates in metabolic intermediate biosynthesis; chorismate biosynthesis; chorismate from D-erythrose 4-phosphate and phosphoenolpyruvate: step 7/7. Functionally, catalyzes the anti-1,4-elimination of the C-3 phosphate and the C-6 proR hydrogen from 5-enolpyruvylshikimate-3-phosphate (EPSP) to yield chorismate, which is the branch point compound that serves as the starting substrate for the three terminal pathways of aromatic amino acid biosynthesis. This reaction introduces a second double bond into the aromatic ring system. This chain is Chorismate synthase, found in Rhodopseudomonas palustris (strain ATCC BAA-98 / CGA009).